A 337-amino-acid chain; its full sequence is Protein RecA (337 aa).

Gly66–Thr73 is a binding site for ATP.

Belongs to the RecA family.

It is found in the cytoplasm. Can catalyze the hydrolysis of ATP in the presence of single-stranded DNA, the ATP-dependent uptake of single-stranded DNA by duplex DNA, and the ATP-dependent hybridization of homologous single-stranded DNAs. It interacts with LexA causing its activation and leading to its autocatalytic cleavage. The protein is Protein RecA of Mesomycoplasma hyopneumoniae (strain 232) (Mycoplasma hyopneumoniae).